Consider the following 194-residue polypeptide: Imidazoleglycerol-phosphate dehydratase (194 aa).

Belongs to the imidazoleglycerol-phosphate dehydratase family.

It localises to the cytoplasm. The enzyme catalyses D-erythro-1-(imidazol-4-yl)glycerol 3-phosphate = 3-(imidazol-4-yl)-2-oxopropyl phosphate + H2O. It functions in the pathway amino-acid biosynthesis; L-histidine biosynthesis; L-histidine from 5-phospho-alpha-D-ribose 1-diphosphate: step 6/9. The chain is Imidazoleglycerol-phosphate dehydratase from Halalkalibacterium halodurans (strain ATCC BAA-125 / DSM 18197 / FERM 7344 / JCM 9153 / C-125) (Bacillus halodurans).